The chain runs to 980 residues: Hypoxia up-regulated protein 1 (980 aa).

Positions 1–24 (MREKLSLWAIFCLVVAFLPSQTES) are cleaved as a signal peptide. 2 disordered regions span residues 558–682 (EEES…DIAV) and 894–980 (KPKP…EDEL). Basic and acidic residues-rich tracts occupy residues 599-656 (AGKE…PEEK) and 896-906 (KPKDKAKDKNS). Polar residues predominate over residues 907-916 (TSESSKANST). Basic and acidic residues-rich tracts occupy residues 918–949 (DAEKVIPPKTEDGAEKVKPAEEPPVVEEKAEE) and 960–980 (TDDKTESTESSKSENHIEDEL). A Prevents secretion from ER motif is present at residues 977–980 (EDEL).

The protein belongs to the heat shock protein 70 family.

It localises to the endoplasmic reticulum lumen. In terms of biological role, has a pivotal role in cytoprotective cellular mechanisms triggered by oxygen deprivation. May play a role as a molecular chaperone and participate in protein folding. The sequence is that of Hypoxia up-regulated protein 1 (hyou1) from Danio rerio (Zebrafish).